The primary structure comprises 319 residues: N-acetylneuraminate lyase (319 aa).

Thr51 and Thr52 together coordinate aceneuramate. The active-site Proton donor is Tyr143. Catalysis depends on Lys173, which acts as the Schiff-base intermediate with substrate. Aceneuramate is bound by residues Ser175, Gly199, Asp201, Glu202, and Ser218.

This sequence belongs to the DapA family. NanA subfamily. Homotetramer.

It localises to the cytoplasm. It catalyses the reaction aceneuramate = aldehydo-N-acetyl-D-mannosamine + pyruvate. Its pathway is amino-sugar metabolism; N-acetylneuraminate degradation. Functionally, catalyzes the cleavage of N-acetylneuraminic acid (sialic acid) to form pyruvate and N-acetylmannosamine via a Schiff base intermediate. It prevents sialic acids from being recycled and returning to the cell surface. Involved in the N-glycolylneuraminic acid (Neu5Gc) degradation pathway. This Sus scrofa (Pig) protein is N-acetylneuraminate lyase.